A 907-amino-acid polypeptide reads, in one-letter code: Androgen receptor (907 aa).

The interval 1-545 (MEVQLGLGRV…PIDYYFPPQK (545 aa)) is modulating. The tract at residues 1–574 (MEVQLGLGRV…GSCKVFFKRA (574 aa)) is interaction with ZNF318. Disordered regions lie at residues 36-152 (NPGP…LSLL) and 200-231 (QQQE…YLGG). A compositionally biased stretch (low complexity) spans 55–76 (QQQQQQQQQQETSPRQQQQQQQ). S67 carries the phosphoserine; by CDK9 modification. Phosphoserine is present on S81. A compositionally biased stretch (polar residues) spans 123–134 (TSATGKGLQQQQ). The span at 200–224 (QQQEVVSEGSSSGRAREAAGASTSS) shows a compositional bias: low complexity. A Phosphotyrosine; by CSK modification is found at Y228. Position 261 is a phosphoserine (S261). Y272 is subject to Phosphotyrosine; by CSK and TNK2. A phosphotyrosine; by CSK mark is found at Y310, Y349, Y360, and Y365. Phosphotyrosine; by CSK and TNK2 is present on Y366. A Glycyl lysine isopeptide (Lys-Gly) (interchain with G-Cter in SUMO) cross-link involves residue K389. Y396 carries the post-translational modification Phosphotyrosine; by CSK. K508 participates in a covalent cross-link: Glycyl lysine isopeptide (Lys-Gly) (interchain with G-Cter in SUMO). Residues Y522 and Y539 each carry the phosphotyrosine; by CSK modification. Positions 539–906 (YYFPPQKTCL…GKVKPIYFHT (368 aa)) are interaction with LPXN. The segment at residues 546–619 (TCLICGDEAS…AGMTLGARKL (74 aa)) is a DNA-binding region (nuclear receptor). NR C4-type zinc fingers lie at residues 547–567 (CLIC…CGSC) and 583–607 (CASR…LRKC). The interval 559 to 649 (YGALTCGSCK…TEEPTQKLTV (91 aa)) is interaction with HIPK3. The segment at 579–906 (QKYLCASRND…GKVKPIYFHT (328 aa)) is interaction with CCAR1. Residues 612–906 (MTLGARKLKK…GKVKPIYFHT (295 aa)) are interaction with KAT7. Residue S638 is modified to Phosphoserine; by STK4/MST1. One can recognise an NR LBD domain in the interval 656–887 (ECQPIFLNVL…DFPEMMAEII (232 aa)). Residues N693 and R740 each contribute to the 17beta-hydroxy-5alpha-androstan-3-one site. Glycyl lysine isopeptide (Lys-Gly) (interchain with G-Cter in ubiquitin) cross-links involve residues K833 and K835. T865 provides a ligand contact to 17beta-hydroxy-5alpha-androstan-3-one. Y903 carries the phosphotyrosine; by CSK modification.

Belongs to the nuclear hormone receptor family. NR3 subfamily. Binds DNA as a homodimer. Part of a ternary complex containing AR, EFCAB6/DJBP and PARK7. Interacts with HIPK3 and NR0B2 in the presence of androgen. The ligand binding domain interacts with KAT7/HBO1 in the presence of dihydrotestosterone. Interacts with EFCAB6/DJBP, PQBP1, RANBP9, RBAK, SPDEF, SRA1, TGFB1I1 and RREB1. Interacts with ZMIZ1/ZIMP10 and ZMIZ2/ZMIP7 which both enhance its transactivation activity. Interacts with SLC30A9 and RAD54L2/ARIP4. Interacts with MACROD1 (via macro domain). Interacts via the ligand-binding domain with LXXLL and FXXLF motifs from NCOA1, NCOA2, NCOA3 and MAGEA11. Interacts (via nuclear receptor DNA binding domain and nuclear receptor ligand binding domain) with NCOA4. The AR N-terminal poly-Gln region binds Ran resulting in enhancement of AR-mediated transactivation. Ran-binding decreases as the poly-Gln length increases. Interacts with HIP1 (via coiled coil domain). Interacts (via ligand-binding domain) with TRIM68. Interacts with TNK2. Interacts with USP26. Interacts with RNF6. Interacts (regulated by RNF6 probably through polyubiquitination) with RNF14; regulates AR transcriptional activity. Interacts with PRMT2 and TRIM24. Interacts with RACK1. Interacts with RANBP10; this interaction enhances dihydrotestosterone-induced AR transcriptional activity. Interacts with PRPF6 in a hormone-independent way; this interaction enhances dihydrotestosterone-induced AR transcriptional activity. Interacts with STK4/MST1. Interacts with ZIPK/DAPK3. Interacts with LPXN. Interacts with MAK. Part of a complex containing AR, MAK and NCOA3. Interacts with CRY1. Interacts with CCAR1 and GATA2. Interacts with ZNF318. Interacts with BUD31. Interacts with ARID4A. Interacts with ARID4B. Interacts (via NR LBD domain) with ZBTB7A; the interaction is direct and androgen-dependent. Interacts with NCOR1. Interacts with NCOR2. Interacts witH CRY2 in a ligand-dependent manner. In terms of processing, phosphorylated in prostate cancer cells in response to several growth factors including EGF. Phosphorylation is induced by c-Src kinase (CSK). Tyr-522 is one of the major phosphorylation sites and an increase in phosphorylation and Src kinase activity is associated with prostate cancer progression. Phosphorylation by TNK2 enhances the DNA-binding and transcriptional activity. Phosphorylation at Ser-67 by CDK9 regulates AR promoter selectivity and cell growth. Post-translationally, sumoylated on Lys-389 (major) and Lys-508. Ubiquitinated. Deubiquitinated by USP26. 'Lys-6' and 'Lys-27'-linked polyubiquitination by RNF6 modulates AR transcriptional activity and specificity. Palmitoylated by ZDHHC7 and ZDHHC21. Palmitoylation is required for plasma membrane targeting and for rapid intracellular signaling via ERK and AKT kinases and cAMP generation.

Its subcellular location is the nucleus. It localises to the cytoplasm. Steroid hormone receptors are ligand-activated transcription factors that regulate eukaryotic gene expression and affect cellular proliferation and differentiation in target tissues. Transcription factor activity is modulated by bound coactivator and corepressor proteins like ZBTB7A that recruits NCOR1 and NCOR2 to the androgen response elements/ARE on target genes, negatively regulating androgen receptor signaling and androgen-induced cell proliferation. Transcription activation is also down-regulated by NR0B2. Activated, but not phosphorylated, by HIPK3 and ZIPK/DAPK3. This Canis lupus familiaris (Dog) protein is Androgen receptor (AR).